A 448-amino-acid polypeptide reads, in one-letter code: Mitochondrial distribution and morphology protein 10 (448 aa).

The protein belongs to the MDM10 family. In terms of assembly, component of the ER-mitochondria encounter structure (ERMES) or MDM complex, composed of MMM1, MDM10, MDM12 and MDM34. Associates with the mitochondrial outer membrane sorting assembly machinery SAM(core) complex.

Its subcellular location is the mitochondrion outer membrane. Component of the ERMES/MDM complex, which serves as a molecular tether to connect the endoplasmic reticulum and mitochondria. Components of this complex are involved in the control of mitochondrial shape and protein biogenesis and may function in phospholipid exchange. MDM10 is involved in the late assembly steps of the general translocase of the mitochondrial outer membrane (TOM complex). Functions in the TOM40-specific route of the assembly of outer membrane beta-barrel proteins, including the association of TOM40 with the receptor TOM22 and small TOM proteins. Can associate with the SAM(core) complex as well as the MDM12-MMM1 complex, both involved in late steps of the major beta-barrel assembly pathway, that is responsible for biogenesis of all outer membrane beta-barrel proteins. May act as a switch that shuttles between both complexes and channels precursor proteins into the TOM40-specific pathway. Plays a role in mitochondrial morphology and in the inheritance of mitochondria. This is Mitochondrial distribution and morphology protein 10 from Podospora anserina (strain S / ATCC MYA-4624 / DSM 980 / FGSC 10383) (Pleurage anserina).